We begin with the raw amino-acid sequence, 207 residues long: Large ribosomal subunit protein bL25 (207 aa).

The tract at residues Gln-182–Asp-207 is disordered.

It belongs to the bacterial ribosomal protein bL25 family. CTC subfamily. Part of the 50S ribosomal subunit; part of the 5S rRNA/L5/L18/L25 subcomplex. Contacts the 5S rRNA. Binds to the 5S rRNA independently of L5 and L18.

This is one of the proteins that binds to the 5S RNA in the ribosome where it forms part of the central protuberance. The polypeptide is Large ribosomal subunit protein bL25 (Micrococcus luteus (strain ATCC 4698 / DSM 20030 / JCM 1464 / CCM 169 / CCUG 5858 / IAM 1056 / NBRC 3333 / NCIMB 9278 / NCTC 2665 / VKM Ac-2230) (Micrococcus lysodeikticus)).